A 148-amino-acid chain; its full sequence is MSSQNTSNSRHPASSASALPNRTNTARRSTSPRTSTGSSSTNTNTKTVDHAGTTFISSTSKRGRSTKAGSVHSVPMKRTKRVRRTPAQRIEHENKENIQTEKVYRIKPVQRVLSPSDLTNELTILDLFHVPRPNETFDITDRVNNTSR.

A compositionally biased stretch (polar residues) spans 1–20 (MSSQNTSNSRHPASSASALP). The interval 1-96 (MSSQNTSNSR…AQRIEHENKE (96 aa)) is disordered. A compositionally biased stretch (low complexity) spans 21–46 (NRTNTARRSTSPRTSTGSSSTNTNTK). Residues 75–86 (PMKRTKRVRRTP) show a composition bias toward basic residues.

In terms of biological role, acts as a critical meiotic inducer by binding non-covalently to protein kinase ran1/pat1 inhibiting its enzymatic activity. Inhibits ran1/pat1 by acting as a pseudosubstrate for ran1/pat1 instead of its natural substrate ste11. Inactivation of the ran1/pat1 protein kinase is both necessary and sufficient to divert a vegetative cell from mitotic division to meiotic differentiation. This chain is Meiosis inducing protein mei3, found in Schizosaccharomyces pombe (strain 972 / ATCC 24843) (Fission yeast).